A 254-amino-acid chain; its full sequence is MEAPKMELKSYKRKNASLSPSSSPAKAQRTHLSLEEKIKLMRLVVRHKHELVDRKTSEFYAKIARIGYEDEGLAIHTESACRNQIISIMRVYEQRLAHRQPGMKTTPEEDELDQLCDEWKARLSELQQYREKFLVGKRKCDCNDEINERLKKLTEEQQNVDMLVAKVNFLSKHLHDNEEKLMQVNAKMDEVLAENKRLQQLLDHNDLLSKLEPPSAYAPHGVNMGTNMGANMGANMNAIRGGLHSSISPNLGDH.

Residues 1-10 (MEAPKMELKS) are compositionally biased toward basic and acidic residues. A disordered region spans residues 1–30 (MEAPKMELKSYKRKNASLSPSSSPAKAQRT). Residues 16–25 (ASLSPSSSPA) show a composition bias toward low complexity. Phosphoserine is present on residues S17 and S19. 4 repeat units span residues 221–224 (GVNM), 225–228 (GTNM), 229–232 (GANM), and 233–236 (GANM). The segment at 221 to 236 (GVNMGTNMGANMGANM) is 4 X 4 AA tandem repeats of G-[ATV]-N-M.

In terms of assembly, homodimer.

The protein resides in the nucleus. In terms of biological role, binds to sequences required for mating-type switching. Makes a simultaneous contact with both the alpha and beta domains of the switch-activating site SAS1. Also binds to replication fork barrier 1 (RFB1) located within a 78 base pair sequence near the 3' end of the rRNA coding region. This leads to replication fork blockage. It binds the consensus sequence 5'-TA[AG]GCAGNTN[CT]AACG[AC]G-3'. Functionally, has a role in chromosome organization and integrity where it is involved in chromosome segregation. Has a role in sister chromatid cohesion and condensation. This is Switch-activating protein 1 (sap1) from Schizosaccharomyces pombe (strain 972 / ATCC 24843) (Fission yeast).